We begin with the raw amino-acid sequence, 75 residues long: Exodeoxyribonuclease 7 small subunit (75 aa).

Belongs to the XseB family. In terms of assembly, heterooligomer composed of large and small subunits.

The protein resides in the cytoplasm. The catalysed reaction is Exonucleolytic cleavage in either 5'- to 3'- or 3'- to 5'-direction to yield nucleoside 5'-phosphates.. Its function is as follows. Bidirectionally degrades single-stranded DNA into large acid-insoluble oligonucleotides, which are then degraded further into small acid-soluble oligonucleotides. The sequence is that of Exodeoxyribonuclease 7 small subunit from Listeria innocua serovar 6a (strain ATCC BAA-680 / CLIP 11262).